Here is a 624-residue protein sequence, read N- to C-terminus: ERAD-associated E3 ubiquitin-protein ligase ASI1 (624 aa).

Residues 1 to 69 lie on the Perinuclear space side of the membrane; sequence MNSSTSSENV…SEEIPPTLRS (69 aa). Residues asparagine 2, asparagine 19, and asparagine 29 are each glycosylated (N-linked (GlcNAc...) asparagine). Residues 70 to 90 form a helical membrane-spanning segment; sequence VFDTIGFFFSPYAIFCFVIAI. The Nuclear segment spans residues 91–116; it reads VLNRFVVFYAVLNNGSRRTLPLWLSN. Residues 117–137 traverse the membrane as a helical segment; the sequence is VFHVSAVVVLAMVSLGPLTLG. Residues 138–152 lie on the Perinuclear space side of the membrane; the sequence is KDFKILGDPAFAQEK. Residues 153–173 form a helical membrane-spanning segment; the sequence is FLLNIFYAFAYSYCVETIFTI. The Nuclear portion of the chain corresponds to 174–209; sequence MRNSSPLEGTDYSLFELSIQFYTMTNNNTKFLDSPD. Residues 210 to 230 traverse the membrane as a helical segment; it reads YIIDCSMAILSRILIHLVEIF. Topologically, residues 231 to 273 are perinuclear space; that stretch reads RLRNYRLLFSTIMNLCHICYLGIRVKQGGWKSLPFSVKFRHFP. A helical transmembrane segment spans residues 274–294; it reads KLFSVSIICLSLLIFKLSCLI. Over 295–624 the chain is Nuclear; sequence RWDPFGKSRN…CKVHPVSDSK (330 aa). Residues 467 to 490 are disordered; the sequence is TSDDEYSEDYEPSEVESLGDSDEE. The span at 468 to 490 shows a compositional bias: acidic residues; that stretch reads SDDEYSEDYEPSEVESLGDSDEE. The RING-type; atypical zinc finger occupies 568–608; it reads CAVCKVNERNTVLWPCRCFAICEDCRISLGLRGFSTCVCCR.

As to quaternary structure, component of the Asi complex, which contains ASI1, ASI2 and ASI3. Interacts directly with ASI3. In terms of processing, glycosylation is not required for ASI1 function.

It localises to the nucleus inner membrane. The enzyme catalyses S-ubiquitinyl-[E2 ubiquitin-conjugating enzyme]-L-cysteine + [acceptor protein]-L-lysine = [E2 ubiquitin-conjugating enzyme]-L-cysteine + N(6)-ubiquitinyl-[acceptor protein]-L-lysine.. Its function is as follows. E3 ubiquitin-protein ligase which transfers ubiquitin to substrates promoting their degradation. Part of the nuclear inner membrane (INM)-specific branch of the ER-associated degradation (ERAD) pathway, required for the elimination of misfolded proteins in the INM, a specialized ER subdomain. Required for ERG11 degradation. Negative regulator of SPS-sensor signaling. Together with ASI2 and ASI3, prevents the unprocessed precursor forms of STP1 and STP2 that escape cytoplasmic anchoring from inducing SPS-sensor-regulated genes in the absence of inducing signals. Controls amino acid permease (AAP) gene expression in response to amino acid availability, a process mediated by the transcription factors STP1 and STP1. This Saccharomyces cerevisiae (strain ATCC 204508 / S288c) (Baker's yeast) protein is ERAD-associated E3 ubiquitin-protein ligase ASI1 (ASI1).